Reading from the N-terminus, the 60-residue chain is Large ribosomal subunit protein bL32 (60 aa).

Positions 1-46 are disordered; it reads MAVQQNKKSPSKRGMHRSHNALNTPGTAIEPTTGEVHLRHHISPTG. Residues 9–19 show a composition bias toward basic residues; that stretch reads SPSKRGMHRSH.

It belongs to the bacterial ribosomal protein bL32 family.

The chain is Large ribosomal subunit protein bL32 from Leptothrix cholodnii (strain ATCC 51168 / LMG 8142 / SP-6) (Leptothrix discophora (strain SP-6)).